The sequence spans 308 residues: Homoserine O-acetyltransferase (308 aa).

The Acyl-thioester intermediate role is filled by Cys-142. Substrate contacts are provided by Lys-163 and Ser-192. The active-site Proton acceptor is the His-235. Glu-237 is a catalytic residue. Arg-249 contacts substrate.

This sequence belongs to the MetA family.

It is found in the cytoplasm. It carries out the reaction L-homoserine + acetyl-CoA = O-acetyl-L-homoserine + CoA. The protein operates within amino-acid biosynthesis; L-methionine biosynthesis via de novo pathway; O-acetyl-L-homoserine from L-homoserine: step 1/1. Transfers an acetyl group from acetyl-CoA to L-homoserine, forming acetyl-L-homoserine. The sequence is that of Homoserine O-acetyltransferase from Rhizobium rhizogenes (strain K84 / ATCC BAA-868) (Agrobacterium radiobacter).